Consider the following 867-residue polypeptide: Nuclear cap-binding protein subunit 1 (867 aa).

An MIF4G domain is found at L9–S228. A disordered region spans residues S752–N797. Residues D788 to N797 show a composition bias toward polar residues.

The protein belongs to the NCBP1 family. Component of the nuclear cap-binding complex (CBC), a heterodimer composed of ABH1/CBP80 and CBP20 that interacts with m7GpppG-capped RNA.

The protein resides in the nucleus. It localises to the cytoplasm. Functionally, component of the cap-binding complex (CBC), which binds cotranscriptionally to the 5'-cap of pre-mRNAs and is involved in various processes such as pre-mRNA splicing and RNA-mediated gene silencing (RNAi) by microRNAs (miRNAs). The CBC complex is involved in miRNA-mediated RNA interference and is required for primary miRNA processing. In the CBC complex, ABH1/CBP80 does not bind directly capped RNAs (m7GpppG-capped RNA) but is required to stabilize the movement of the N-terminal loop of CBP20 and lock the CBC into a high affinity cap-binding state with the cap structure. The chain is Nuclear cap-binding protein subunit 1 (ABH1) from Oryza sativa subsp. japonica (Rice).